We begin with the raw amino-acid sequence, 414 residues long: E3 ubiquitin-protein ligase makorin-2 (414 aa).

2 consecutive C3H1-type zinc fingers follow at residues 2-29 (STKQ…HDLT) and 31-58 (SKPS…HIKP). A disordered region spans residues 57-94 (KPPGRGSGAPADHSNRSSSSAGASAPGPGPPANTSKHL). The segment covering 73–82 (SSSSAGASAP) has biased composition (low complexity). The C3H1-type 3 zinc finger occupies 164-191 (QTSPQICPFLAAGQCQYGESCPYLHGEM). The makorin-type Cys-His stretch occupies residues 192–221 (CEICRQHVLHPHDPEQRAAHEKKCMVAFEM). The segment at 237 to 291 (CKICLDVVYEKSSPSERRFGILSSCAHTYCLNCIRQWRCVEQLHNQIRKSCPECR) adopts an RING-type zinc-finger fold. Residues 320–349 (GVSKKACKYFDQGRGTCPFGGKCFYMHAYA) form a C3H1-type 4 zinc finger.

Its subcellular location is the cytoplasm. The protein localises to the nucleus. The catalysed reaction is S-ubiquitinyl-[E2 ubiquitin-conjugating enzyme]-L-cysteine + [acceptor protein]-L-lysine = [E2 ubiquitin-conjugating enzyme]-L-cysteine + N(6)-ubiquitinyl-[acceptor protein]-L-lysine.. It functions in the pathway protein modification; protein ubiquitination. In terms of biological role, E3 ubiquitin ligase catalyzing the covalent attachment of ubiquitin moieties onto substrate proteins. Inhibits neurogenesis and axis formation during embryonic development by modulating the phosphatidylinositol 3-kinase (PI3K) pathway. Acts downstream of PI3K and akt1 to up-regulate gsk3b mRNA expression. In Danio rerio (Zebrafish), this protein is E3 ubiquitin-protein ligase makorin-2 (mkrn2).